We begin with the raw amino-acid sequence, 295 residues long: Mycothiol acetyltransferase (295 aa).

Glu-30 serves as a coordination point for 1D-myo-inositol 2-(L-cysteinylamino)-2-deoxy-alpha-D-glucopyranoside. 62–64 (LVV) provides a ligand contact to acetyl-CoA. The region spanning 137–295 (VTVRAFRADS…DDDTHVQYRR (159 aa)) is the N-acetyltransferase domain. 1D-myo-inositol 2-(L-cysteinylamino)-2-deoxy-alpha-D-glucopyranoside contacts are provided by Glu-165, Lys-209, and Glu-227. Acetyl-CoA contacts are provided by residues 231-233 (VGI) and 238-244 (QGRGLGK). Tyr-265 is a 1D-myo-inositol 2-(L-cysteinylamino)-2-deoxy-alpha-D-glucopyranoside binding site.

The protein belongs to the acetyltransferase family. MshD subfamily. In terms of assembly, monomer.

The catalysed reaction is 1D-myo-inositol 2-(L-cysteinylamino)-2-deoxy-alpha-D-glucopyranoside + acetyl-CoA = mycothiol + CoA + H(+). Its function is as follows. Catalyzes the transfer of acetyl from acetyl-CoA to desacetylmycothiol (Cys-GlcN-Ins) to form mycothiol. The chain is Mycothiol acetyltransferase from Nocardioides sp. (strain ATCC BAA-499 / JS614).